A 541-amino-acid polypeptide reads, in one-letter code: ATP synthase subunit alpha (541 aa).

Residue 173–180 participates in ATP binding; it reads GDRQTGKT. Residues 517 to 527 are compositionally biased toward basic and acidic residues; sequence GIEPGVEEHES. The interval 517–541 is disordered; the sequence is GIEPGVEEHESLGATAVNQETIVKK. Positions 532-541 are enriched in polar residues; it reads AVNQETIVKK.

Belongs to the ATPase alpha/beta chains family. As to quaternary structure, F-type ATPases have 2 components, CF(1) - the catalytic core - and CF(0) - the membrane proton channel. CF(1) has five subunits: alpha(3), beta(3), gamma(1), delta(1), epsilon(1). CF(0) has three main subunits: a(1), b(2) and c(9-12). The alpha and beta chains form an alternating ring which encloses part of the gamma chain. CF(1) is attached to CF(0) by a central stalk formed by the gamma and epsilon chains, while a peripheral stalk is formed by the delta and b chains.

It localises to the cell membrane. The enzyme catalyses ATP + H2O + 4 H(+)(in) = ADP + phosphate + 5 H(+)(out). Produces ATP from ADP in the presence of a proton gradient across the membrane. The alpha chain is a regulatory subunit. The protein is ATP synthase subunit alpha of Kocuria rhizophila (strain ATCC 9341 / DSM 348 / NBRC 103217 / DC2201).